A 127-amino-acid chain; its full sequence is MWRNSEERENRTSGRSQGSYQEIIGRTWIFRGAHRGRVNKKNIVWHELIGLKVRVVNSTHPGYVGIEGYVIDETRNMLVIAGENKVWKVPKDVCIFEFETWDGTKIKISGEKLVGRPEMRLKKRWRK.

The protein belongs to the eukaryotic/archaeal RNase P protein component 1 family. As to quaternary structure, consists of a catalytic RNA component and at least 4 protein subunits. Forms a subcomplex with Rnp4 which stimulates the catalytic RNA.

The protein resides in the cytoplasm. The enzyme catalyses Endonucleolytic cleavage of RNA, removing 5'-extranucleotides from tRNA precursor.. In terms of biological role, part of ribonuclease P, a protein complex that generates mature tRNA molecules by cleaving their 5'-ends. The RNA is catalytic, but its KM for pre-tRNA is 170-fold decreased in the presence of the 4 known protein subunits (Rnp1-4). The protein subunits also decrease the amount of Mg(2+) needed for activity. The protein is Ribonuclease P protein component 1 of Pyrococcus furiosus (strain ATCC 43587 / DSM 3638 / JCM 8422 / Vc1).